We begin with the raw amino-acid sequence, 122 residues long: Large ribosomal subunit protein uL14 (122 aa).

This sequence belongs to the universal ribosomal protein uL14 family. As to quaternary structure, part of the 50S ribosomal subunit. Forms a cluster with proteins L3 and L19. In the 70S ribosome, L14 and L19 interact and together make contacts with the 16S rRNA in bridges B5 and B8.

In terms of biological role, binds to 23S rRNA. Forms part of two intersubunit bridges in the 70S ribosome. The chain is Large ribosomal subunit protein uL14 from Janthinobacterium sp. (strain Marseille) (Minibacterium massiliensis).